Here is a 151-residue protein sequence, read N- to C-terminus: Ribosome maturation factor RimP (151 aa).

Belongs to the RimP family.

It localises to the cytoplasm. In terms of biological role, required for maturation of 30S ribosomal subunits. This is Ribosome maturation factor RimP from Endomicrobium trichonymphae.